Reading from the N-terminus, the 352-residue chain is Protein MGF 360-16R (352 aa).

Belongs to the asfivirus MGF 360 family.

In terms of biological role, plays a role in virus cell tropism, and may be required for efficient virus replication in macrophages. The polypeptide is Protein MGF 360-16R (African swine fever virus (isolate Warthog/Namibia/Wart80/1980) (ASFV)).